The sequence spans 728 residues: Probable subtilase-type serine protease DR_A0283 (728 aa).

The first 22 residues, 1-22, serve as a signal peptide directing secretion; that stretch reads MPGALPMKKISLAVLSLTTLLA. Positions 23–148 are excised as a propeptide; that stretch reads ACGQPQTSPQ…RTAQDQLGAQ (126 aa). The Peptidase S8 domain maps to 159-471; that stretch reads QYALDSNHLH…YGLIRMDKLA (313 aa). Catalysis depends on charge relay system residues D188, H242, and S412.

This sequence belongs to the peptidase S8 family.

Its subcellular location is the secreted. The sequence is that of Probable subtilase-type serine protease DR_A0283 from Deinococcus radiodurans (strain ATCC 13939 / DSM 20539 / JCM 16871 / CCUG 27074 / LMG 4051 / NBRC 15346 / NCIMB 9279 / VKM B-1422 / R1).